The primary structure comprises 507 residues: Probable Xaa-Pro aminopeptidase HCBG_01484 (507 aa).

4 residues coordinate Mn(2+): Asp283, Asp294, Glu431, and Glu469.

Belongs to the peptidase M24B family. Requires Mn(2+) as cofactor.

It catalyses the reaction Release of any N-terminal amino acid, including proline, that is linked to proline, even from a dipeptide or tripeptide.. In terms of biological role, catalyzes the removal of a penultimate prolyl residue from the N-termini of peptides. The polypeptide is Probable Xaa-Pro aminopeptidase HCBG_01484 (Ajellomyces capsulatus (strain G186AR / H82 / ATCC MYA-2454 / RMSCC 2432) (Darling's disease fungus)).